Reading from the N-terminus, the 251-residue chain is Ubiquinone/menaquinone biosynthesis C-methyltransferase UbiE (251 aa).

S-adenosyl-L-methionine contacts are provided by residues Thr74, Asp95, 123-124 (NA), and Ser140.

It belongs to the class I-like SAM-binding methyltransferase superfamily. MenG/UbiE family.

The enzyme catalyses a 2-demethylmenaquinol + S-adenosyl-L-methionine = a menaquinol + S-adenosyl-L-homocysteine + H(+). The catalysed reaction is a 2-methoxy-6-(all-trans-polyprenyl)benzene-1,4-diol + S-adenosyl-L-methionine = a 5-methoxy-2-methyl-3-(all-trans-polyprenyl)benzene-1,4-diol + S-adenosyl-L-homocysteine + H(+). It participates in quinol/quinone metabolism; menaquinone biosynthesis; menaquinol from 1,4-dihydroxy-2-naphthoate: step 2/2. Its pathway is cofactor biosynthesis; ubiquinone biosynthesis. Its function is as follows. Methyltransferase required for the conversion of demethylmenaquinol (DMKH2) to menaquinol (MKH2) and the conversion of 2-polyprenyl-6-methoxy-1,4-benzoquinol (DDMQH2) to 2-polyprenyl-3-methyl-6-methoxy-1,4-benzoquinol (DMQH2). The polypeptide is Ubiquinone/menaquinone biosynthesis C-methyltransferase UbiE (Escherichia fergusonii (strain ATCC 35469 / DSM 13698 / CCUG 18766 / IAM 14443 / JCM 21226 / LMG 7866 / NBRC 102419 / NCTC 12128 / CDC 0568-73)).